A 615-amino-acid chain; its full sequence is Sodium-coupled neutral amino acid transporter 9 homolog (615 aa).

The Cytoplasmic segment spans residues 1 to 165 (MPPFFAEFTE…LKDVSGKQGS (165 aa)). Residues 41 to 65 (VDDNDTDPLLDDEPPRRLPPAGGVP) form a disordered region. The span at 42-52 (DDNDTDPLLDD) shows a compositional bias: acidic residues. A helical transmembrane segment spans residues 166–186 (IVTIFSIWNTMMGTSLLAMPW). Residues 175-180 (TMMGTS) form an important for arginine binding and amino acid transport region. Residues 187–192 (ALQQAG) lie on the Lumenal side of the membrane. A helical membrane pass occupies residues 193 to 213 (LVLGIIIMLSMAAICFYTAYI). Residues 214-246 (VIESPKRLQDLSVDPLLAEFSDVCKSLFGRIGE) are Cytoplasmic-facing. A helical transmembrane segment spans residues 247-273 (YCAVVFSVCVLIGGVIVYWVLMSNFLY). The Lumenal segment spans residues 274 to 341 (YTGAVVYESM…TGDDSWSFDK (68 aa)). N-linked (GlcNAc...) asparagine glycans are attached at residues Asn286 and Asn295. A disulfide bridge connects residues Cys304 and Cys478. Residues 342–358 (FWTLRGTVPIYLAFALF) form a helical membrane-spanning segment. The Cytoplasmic segment spans residues 359–367 (PLMNFKSPT). A helical membrane pass occupies residues 368–392 (FFTKFNVLGTISVMYLLMFVFSKLL). The Lumenal segment spans residues 393 to 413 (ECGVNMDFSNPKSIHYVQLAN). A helical transmembrane segment spans residues 414–434 (MHFPALSGTLTLSYFIHNAVL). At 435–451 (TILRNQKHPENNARDLS) the chain is on the cytoplasmic side. The helical transmembrane segment at 452-472 (IGYCLVAFCYVFIGFTFFAAF) threads the bilayer. Residues 473–491 (PVQRSCISDNFLNNFGAGD) lie on the Lumenal side of the membrane. Residues 492–512 (VLSSTARLFLLFQMITVLPLL) form a helical membrane-spanning segment. Topologically, residues 513 to 533 (MFLVRSQLFYAIFGQTWPGAI) are cytoplasmic. The chain crosses the membrane as a helical span at residues 534–554 (RVIILNVLLIAVAVGFATFYP). Over 555 to 561 (NVGSILR) the chain is Lumenal. A helical transmembrane segment spans residues 562–582 (YVGSISGLVYVFALPAMVYIK). The Cytoplasmic segment spans residues 583-594 (QSEAAGTLTPMK). Residues 595-615 (KYAHYGIIVIGVANLIAQFVI) traverse the membrane as a helical segment.

The protein belongs to the amino acid/polyamine transporter 2 family. SLC38A9 subfamily.

The protein localises to the lysosome membrane. The protein resides in the late endosome membrane. With respect to regulation, amino acid transport is sodium-dependent. Transport of leucine, tyrosine and phenylalanine is increased by arginine binding. Its function is as follows. Lysosomal amino acid transporter involved in the activation of mTORC1 in response to amino acid levels. Probably acts as an amino acid sensor of the Rag GTPases and Ragulator complexes, 2 complexes involved in amino acid sensing and activation of mTORC1, a signaling complex promoting cell growth in response to growth factors, energy levels, and amino acids. The protein is Sodium-coupled neutral amino acid transporter 9 homolog of Caenorhabditis elegans.